Reading from the N-terminus, the 505-residue chain is Maturase K (505 aa).

The protein belongs to the intron maturase 2 family. MatK subfamily.

It localises to the plastid. The protein localises to the chloroplast. Its function is as follows. Usually encoded in the trnK tRNA gene intron. Probably assists in splicing its own and other chloroplast group II introns. The polypeptide is Maturase K (Idiospermum australiense (Ribbonwood tree)).